Here is a 307-residue protein sequence, read N- to C-terminus: Membrane protein insertase YidC 2 (307 aa).

The signal sequence occupies residues 1–23; it reads MKLTLNRILFSGLALSILLTLTG. C24 is lipidated: N-palmitoyl cysteine. C24 carries S-diacylglycerol cysteine lipidation. A run of 5 helical transmembrane segments spans residues 58–78, 135–155, 179–199, 209–225, and 231–251; these read LGYG…ILPL, LGGI…AMYF, VLTA…MMAV, TMMY…SFSL, and LYWL…TYLL. Residues 263-307 form a disordered region; it reads YAKNPPKAYQSTSSRKDVTPSQNMEQANLPKKIKSNRNAGKQRKR. The segment covering 271 to 288 has biased composition (polar residues); the sequence is YQSTSSRKDVTPSQNMEQ. Positions 293-307 are enriched in basic residues; that stretch reads KKIKSNRNAGKQRKR.

This sequence belongs to the OXA1/ALB3/YidC family. Type 2 subfamily.

The protein localises to the cell membrane. Functionally, required for the insertion and/or proper folding and/or complex formation of integral membrane proteins into the membrane. Involved in integration of membrane proteins that insert both dependently and independently of the Sec translocase complex, as well as at least some lipoproteins. The chain is Membrane protein insertase YidC 2 from Streptococcus pyogenes serotype M1.